The following is a 170-amino-acid chain: Thialysine N-epsilon-acetyltransferase (170 aa).

Residues 4–166 (VMIREAKEGD…FRFEGEAMRE (163 aa)) enclose the N-acetyltransferase domain. Substrate is bound at residue 27-28 (YE). Position 29 is an N6-acetyllysine (lysine 29). Glutamate 92 contributes to the substrate binding site. Acetyl-CoA-binding positions include 94-96 (IYV), 102-107 (GQGIGS), 133-135 (NKR), and tyrosine 140. The active-site Proton donor is the tyrosine 140. Glutamate 152 serves as a coordination point for substrate.

This sequence belongs to the acetyltransferase family. Homodimer.

Its subcellular location is the cytoplasm. The catalysed reaction is S-(2-aminoethyl)-L-cysteine + acetyl-CoA = S-(2-acetamidoethyl)-L-cysteine + CoA + H(+). It carries out the reaction an alkane-alpha,omega-diamine + acetyl-CoA = an N-acetylalkane-alpha,omega-diamine + CoA + H(+). Functionally, catalyzes the N-acetylation of the amino acid thialysine (S-(2-aminoethyl)-L-cysteine), a L-lysine analog with the 4-methylene group substituted with a sulfur. May also catalyze acetylation of polyamines, such as norspermidine, spermidine or spermine. However, ability to acetylate polyamines is weak, suggesting that it does not act as a diamine acetyltransferase in vivo. The chain is Thialysine N-epsilon-acetyltransferase from Bos taurus (Bovine).